The primary structure comprises 1487 residues: Probable lysine-specific demethylase SE14 (1487 aa).

Residues 1-23 (MPPQPPPAASASASAPDPAVPAW) are disordered. The span at 9-22 (ASASASAPDPAVPA) shows a compositional bias: low complexity. The JmjN domain occupies 30–71 (APEYRPTESEFADPIAFLSRVEREAAAYGICKVIPPHPRPSR). The segment covering 86-104 (CDAPAPSPAAASDSSIPPS) has biased composition (low complexity). Residues 86–113 (CDAPAPSPAAASDSSIPPSSSSPPPVSA) are disordered. The JmjC domain maps to 232–398 (NSPWNLQAIA…FAKEAAVRRA (167 aa)). Fe cation-binding residues include H275, E277, and H366. Disordered stretches follow at residues 494–555 (SCSK…DDGD) and 684–718 (YGDT…PDVE). Composition is skewed to basic and acidic residues over residues 498-507 (APEKKGEDGP) and 542-551 (QAPEGEKLDT). The C2H2-type 1; degenerate zinc finger occupies 1377–1400 (FQCDIEFCDMTFETKAELRAHQRN). 3 C2H2-type zinc fingers span residues 1400–1424 (NICT…QCVH), 1430–1454 (FKCP…IRVH), and 1460–1486 (YKCS…KFNH).

Fe(2+) is required as a cofactor.

Its subcellular location is the nucleus. Its function is as follows. Histone demethylase that demethylates 'Lys-4' (H3K4me) of histone H3. Involved in the control of flowering time. Has a suppressive effect on floral transition under long day conditions through the demethylation of H3K4me3 in the promoter region of the flower-promoting signal HD3B/RFT1. The sequence is that of Probable lysine-specific demethylase SE14 (SE14) from Oryza sativa subsp. japonica (Rice).